A 394-amino-acid chain; its full sequence is Thioredoxin-interacting protein (394 aa).

Lys212 participates in a covalent cross-link: Glycyl lysine isopeptide (Lys-Gly) (interchain with G-Cter in ubiquitin). Phosphoserine is present on Ser361.

This sequence belongs to the arrestin family. As to quaternary structure, homodimer; disulfide-linked. Interacts with TXN/thioredoxin through its redox-active site. Interacts with transcriptional repressors ZBTB16, ZBTB32 and HDAC1. Interacts with DDIT4. Ubiquitinated; undergoes heterotypic 'Lys-48'-/'Lys-63'-branched polyubiquitination catalyzed by ITCH and UBR5 resulting in proteasomal degradation. Deubiquitinated by USP5, leading to TXNIP stabilization.

It is found in the cytoplasm. Functionally, may act as an oxidative stress mediator by inhibiting thioredoxin activity or by limiting its bioavailability. Interacts with COPS5 and restores COPS5-induced suppression of CDKN1B stability, blocking the COPS5-mediated translocation of CDKN1B from the nucleus to the cytoplasm. Functions as a transcriptional repressor, possibly by acting as a bridge molecule between transcription factors and corepressor complexes, and over-expression will induce G0/G1 cell cycle arrest. Required for the maturation of natural killer cells. Acts as a suppressor of tumor cell growth. Inhibits the proteasomal degradation of DDIT4, and thereby contributes to the inhibition of the mammalian target of rapamycin complex 1 (mTORC1). The sequence is that of Thioredoxin-interacting protein (Txnip) from Rattus norvegicus (Rat).